The following is a 217-amino-acid chain: MRIILLGAPGAGKGTQAKFIMEAFEIPQISTGDMLRAAVKAGSPLGVKVKDIMASGQLVSDDIIIDLVKERISKPDCANGFLFDGFPRTIPQAEALTESGVEIEHVMEIHVDDEEIVARLSGRRVHEASGRIYHVTHNPPKTEGVDDITGEPLVQRDDDQEDTVRNRLSIYHDQTEPLVEYYQKQEAENPGTVKFTRIAGVGPLAEIKDKVLSALGK.

10–15 (GAGKGT) contributes to the ATP binding site. Positions 30–59 (STGDMLRAAVKAGSPLGVKVKDIMASGQLV) are NMP. AMP is bound by residues threonine 31, arginine 36, 57 to 59 (QLV), 85 to 88 (GFPR), and glutamine 92. The LID stretch occupies residues 122-159 (GRRVHEASGRIYHVTHNPPKTEGVDDITGEPLVQRDDD). ATP contacts are provided by residues arginine 123 and 132–133 (IY). AMP-binding residues include arginine 156 and arginine 167. Residue glycine 202 participates in ATP binding.

It belongs to the adenylate kinase family. As to quaternary structure, monomer.

It is found in the cytoplasm. The enzyme catalyses AMP + ATP = 2 ADP. Its pathway is purine metabolism; AMP biosynthesis via salvage pathway; AMP from ADP: step 1/1. In terms of biological role, catalyzes the reversible transfer of the terminal phosphate group between ATP and AMP. Plays an important role in cellular energy homeostasis and in adenine nucleotide metabolism. The sequence is that of Adenylate kinase from Teredinibacter turnerae (strain ATCC 39867 / T7901).